The chain runs to 2346 residues: Myomegalin (2346 aa).

Coiled-coil stretches lie at residues 41–132 (REDI…LVEA), 162–205 (DQYT…LLEE), 238–318 (DSHL…REML), and 350–684 (CSQL…RQYL). Glu-252 bears the Phosphoserine mark. The interval 698-732 (NQQAEVTPTGRLGKQTDQGSMQIPSRDDSTSLTAK) is disordered. Position 704 is a phosphothreonine (Thr-704). Basic and acidic residues predominate over residues 722 to 732 (SRDDSTSLTAK). Coiled-coil stretches lie at residues 743-936 (GDLD…TLAA), 1002-1043 (LQEE…SSVS), 1096-1124 (SSLQ…EQLV), 1212-1240 (STQH…SEAT), 1346-1385 (GKSE…LSVT), and 1431-1455 (GLQA…LPKN). The disordered stretch occupies residues 1193–1214 (DNQSQPRDPGPQSAFSLPGSTQ). A compositionally biased stretch (polar residues) spans 1205-1214 (SAFSLPGSTQ). The Olduvai domain maps to 1551–1642 (KDHKSEKDQA…EEKKASPSHS (92 aa)). Residues 1591–1600 (SLTPSSSHAL) show a composition bias toward low complexity. Disordered stretches follow at residues 1591–1614 (SLTP…SFLS) and 1633–1690 (EEKK…EANQ). The segment covering 1652-1690 (AVLSSKPSSTSASQGAKAESNSNPISLPTPQNTPKEANQ) has biased composition (polar residues). Coiled coils occupy residues 1736-1760 (VVSL…ASTV) and 1840-2077 (GADL…QQLE). Disordered stretches follow at residues 2081–2103 (GKAS…PGNK) and 2127–2156 (VFPS…TSPV). Positions 2085–2103 (LSPSSINQNFPASTDPGNK) are enriched in polar residues. Residues 2273–2312 (ESTERELLELRTKVSKQERLLQSTTEHLKNANQQKESMEQ) adopt a coiled-coil conformation.

As to quaternary structure, interacts with PDE4D. Isoform 13 interacts with MAPRE1 and MAPRE3. Isoform 13 forms a pericentrosomal complex with AKAP9, CDK5RAP2 and EB1/MAPRE1; within this complex, may mediate MAPRE1-binding to CDK5RAP2. Interaction of isoform 13 with AKAP9 stabilizes both proteins. Isoform 13 interacts (via N-terminus) with CAMSAP2; this interaction is much stronger in the presence of AKAP9. In complex with AKAP9, Isoform 13 recruits CAMSAP2 to the Golgi apparatus. Isoform 13 interacts with unglycosylated LGALS3BP; this interaction may connect the pericentrosomal complex to the gamma-tubulin ring complex (gamma-TuRC) to promote microtubule assembly and acetylation. Highly expressed in adult and fetal heart, in skeletal muscle and, to a lower extent, in brain and placenta.

It is found in the golgi apparatus. It localises to the cytoplasm. Its subcellular location is the cytoskeleton. The protein resides in the microtubule organizing center. The protein localises to the centrosome. Functions as an anchor sequestering components of the cAMP-dependent pathway to Golgi and/or centrosomes. In terms of biological role, participates in microtubule dynamics, promoting microtubule assembly. Depending upon the cell context, may act at the level of the Golgi apparatus or that of the centrosome. In complex with AKAP9, recruits CAMSAP2 to the Golgi apparatus and tethers non-centrosomal minus-end microtubules to the Golgi, an important step for polarized cell movement. In complex with AKAP9, EB1/MAPRE1 and CDK5RAP2, contributes to microtubules nucleation and extension from the centrosome to the cell periphery, a crucial process for directed cell migration, mitotic spindle orientation and cell-cycle progression. This chain is Myomegalin (PDE4DIP), found in Homo sapiens (Human).